A 103-amino-acid polypeptide reads, in one-letter code: Integration host factor subunit alpha (103 aa).

The disordered stretch occupies residues 51 to 73; the sequence is FGNFQLRDKPQRPGRNPKTGEEI.

The protein belongs to the bacterial histone-like protein family. As to quaternary structure, heterodimer of an alpha and a beta chain.

In terms of biological role, this protein is one of the two subunits of integration host factor, a specific DNA-binding protein that functions in genetic recombination as well as in transcriptional and translational control. In Azoarcus sp. (strain BH72), this protein is Integration host factor subunit alpha.